Consider the following 446-residue polypeptide: Putative diacyglycerol O-acyltransferase MT3481 (446 aa).

The active-site Proton acceptor is the H129. The disordered stretch occupies residues 425 to 446; sequence SRALPSAARRGRPSVPTARARH.

It belongs to the long-chain O-acyltransferase family.

The catalysed reaction is an acyl-CoA + a 1,2-diacyl-sn-glycerol = a triacyl-sn-glycerol + CoA. It functions in the pathway glycerolipid metabolism; triacylglycerol biosynthesis. The polypeptide is Putative diacyglycerol O-acyltransferase MT3481 (Mycobacterium tuberculosis (strain CDC 1551 / Oshkosh)).